A 750-amino-acid chain; its full sequence is Photosystem I P700 chlorophyll a apoprotein A1 (750 aa).

8 helical membrane passes run 70–93, 156–179, 195–219, 291–309, 346–369, 385–411, 433–455, and 531–549; these read VFSA…FHGA, LYCT…FHYH, LNHH…HVSL, IAHH…GHMY, WHAQ…HHMY, LSLF…IFMV, AIIS…LYIH, and FLVH…LILL. [4Fe-4S] cluster-binding residues include C573 and C582. 2 helical membrane passes run 589–610 and 664–686; these read HVFL…HFSW and LSAY…MFLF. Chlorophyll a' is bound at residue H675. Chlorophyll a-binding residues include M683 and Y691. Residue W692 participates in phylloquinone binding. The chain crosses the membrane as a helical span at residues 724–744; that stretch reads AVGVTHYLLGGIATTWAFFLA.

It belongs to the PsaA/PsaB family. The PsaA/B heterodimer binds the P700 chlorophyll special pair and subsequent electron acceptors. PSI consists of a core antenna complex that captures photons, and an electron transfer chain that converts photonic excitation into a charge separation. The eukaryotic PSI reaction center is composed of at least 11 subunits. P700 is a chlorophyll a/chlorophyll a' dimer, A0 is one or more chlorophyll a, A1 is one or both phylloquinones and FX is a shared 4Fe-4S iron-sulfur center. is required as a cofactor.

The protein localises to the plastid. Its subcellular location is the chloroplast thylakoid membrane. It catalyses the reaction reduced [plastocyanin] + hnu + oxidized [2Fe-2S]-[ferredoxin] = oxidized [plastocyanin] + reduced [2Fe-2S]-[ferredoxin]. PsaA and PsaB bind P700, the primary electron donor of photosystem I (PSI), as well as the electron acceptors A0, A1 and FX. PSI is a plastocyanin-ferredoxin oxidoreductase, converting photonic excitation into a charge separation, which transfers an electron from the donor P700 chlorophyll pair to the spectroscopically characterized acceptors A0, A1, FX, FA and FB in turn. Oxidized P700 is reduced on the lumenal side of the thylakoid membrane by plastocyanin. The polypeptide is Photosystem I P700 chlorophyll a apoprotein A1 (Nasturtium officinale (Watercress)).